A 196-amino-acid chain; its full sequence is Dimiconin (196 aa).

A signal peptide spans 1–21 (MKTIIVVTIFGILTCAYPTDG). 2 N-linked (GlcNAc...) asparagine glycosylation sites follow: Asn-62 and Asn-187.

It belongs to the calycin superfamily. Triabin family. As to expression, salivary gland.

The protein localises to the secreted. Its function is as follows. Inhibits the intrinsic blood coagulation pathway by blocking the activation of host coagulation factor XII (F12) but not the enzymatic activity of activated F12. This Triatoma dimidiata (Kissing bug) protein is Dimiconin.